Consider the following 177-residue polypeptide: Probable DNA-directed RNA polymerase subunit delta (177 aa).

An HTH HARE-type domain is found at 14 to 81 (CSMIEVVHSV…GENRWGLRSW (68 aa)). Residues 90 to 177 (EILPQPKPKK…ETEEEEEEEL (88 aa)) form a disordered region. Positions 106 to 177 (DGFDDYIEED…ETEEEEEEEL (72 aa)) are enriched in acidic residues.

This sequence belongs to the RpoE family. RNAP is composed of a core of 2 alpha, a beta and a beta' subunits. The core is associated with a delta subunit and one of several sigma factors.

Functionally, participates in both the initiation and recycling phases of transcription. In the presence of the delta subunit, RNAP displays an increased specificity of transcription, a decreased affinity for nucleic acids, and an increased efficiency of RNA synthesis because of enhanced recycling. The polypeptide is Probable DNA-directed RNA polymerase subunit delta (Bacillus cereus (strain B4264)).